The primary structure comprises 223 residues: Phosphoribosylformylglycinamidine synthase subunit PurQ (223 aa).

The Glutamine amidotransferase type-1 domain maps to 4–223 (FAVVVFPGTN…FKGMVEWVRS (220 aa)). The active-site Nucleophile is the cysteine 85. Residues histidine 196 and glutamate 198 contribute to the active site.

As to quaternary structure, part of the FGAM synthase complex composed of 1 PurL, 1 PurQ and 2 PurS subunits.

It is found in the cytoplasm. It catalyses the reaction N(2)-formyl-N(1)-(5-phospho-beta-D-ribosyl)glycinamide + L-glutamine + ATP + H2O = 2-formamido-N(1)-(5-O-phospho-beta-D-ribosyl)acetamidine + L-glutamate + ADP + phosphate + H(+). It carries out the reaction L-glutamine + H2O = L-glutamate + NH4(+). The protein operates within purine metabolism; IMP biosynthesis via de novo pathway; 5-amino-1-(5-phospho-D-ribosyl)imidazole from N(2)-formyl-N(1)-(5-phospho-D-ribosyl)glycinamide: step 1/2. Functionally, part of the phosphoribosylformylglycinamidine synthase complex involved in the purines biosynthetic pathway. Catalyzes the ATP-dependent conversion of formylglycinamide ribonucleotide (FGAR) and glutamine to yield formylglycinamidine ribonucleotide (FGAM) and glutamate. The FGAM synthase complex is composed of three subunits. PurQ produces an ammonia molecule by converting glutamine to glutamate. PurL transfers the ammonia molecule to FGAR to form FGAM in an ATP-dependent manner. PurS interacts with PurQ and PurL and is thought to assist in the transfer of the ammonia molecule from PurQ to PurL. This Pyrococcus furiosus (strain ATCC 43587 / DSM 3638 / JCM 8422 / Vc1) protein is Phosphoribosylformylglycinamidine synthase subunit PurQ.